A 207-amino-acid chain; its full sequence is Guanylate kinase (207 aa).

Residues 4–184 form the Guanylate kinase-like domain; it reads GTLYIVSAPS…AQMDFRSIIR (181 aa). 11–18 is an ATP binding site; sequence APSGAGKS.

It belongs to the guanylate kinase family.

The protein resides in the cytoplasm. The enzyme catalyses GMP + ATP = GDP + ADP. In terms of biological role, essential for recycling GMP and indirectly, cGMP. The chain is Guanylate kinase from Aliivibrio fischeri (strain ATCC 700601 / ES114) (Vibrio fischeri).